We begin with the raw amino-acid sequence, 214 residues long: Probable nicotinate-nucleotide adenylyltransferase (214 aa).

Belongs to the NadD family.

It carries out the reaction nicotinate beta-D-ribonucleotide + ATP + H(+) = deamido-NAD(+) + diphosphate. It participates in cofactor biosynthesis; NAD(+) biosynthesis; deamido-NAD(+) from nicotinate D-ribonucleotide: step 1/1. Its function is as follows. Catalyzes the reversible adenylation of nicotinate mononucleotide (NaMN) to nicotinic acid adenine dinucleotide (NaAD). This is Probable nicotinate-nucleotide adenylyltransferase from Pseudomonas aeruginosa (strain UCBPP-PA14).